The chain runs to 297 residues: Formylmethanofuran--tetrahydromethanopterin formyltransferase (297 aa).

It belongs to the FTR family. As to quaternary structure, homotetramer.

It is found in the cytoplasm. It catalyses the reaction N-formylmethanofuran + 5,6,7,8-tetrahydromethanopterin + H(+) = N(5)-formyl-5,6,7,8-tetrahydromethanopterin + methanofuran. It participates in one-carbon metabolism; methanogenesis from CO(2); 5,10-methenyl-5,6,7,8-tetrahydromethanopterin from CO(2): step 2/3. Catalyzes the reversible transfer of a formyl group from formylmethanofuran (formyl-MFR) to tetrahydromethanopterin (H(4)MPT) to produce 5-formyl tetrahydromethanopterin (5-formyl-H(4)MPT) and methanofuran (MFR). This is Formylmethanofuran--tetrahydromethanopterin formyltransferase from Methanothermus fervidus (strain ATCC 43054 / DSM 2088 / JCM 10308 / V24 S).